Consider the following 448-residue polypeptide: Protein kinase C and casein kinase substrate in neurons protein 2 (448 aa).

Residues 11 to 282 (VEVSSDSFWE…NIKTADAVED (272 aa)) form the F-BAR domain. The stretch at 25–274 (KRTVKRIDDG…NIYRELEQNI (250 aa)) forms a coiled coil. Positions 315-386 (SRREKKKASD…DTNPFDEDTS (72 aa)) are disordered. Residues 329-358 (TGINQTGDQVSQPNKHSSVSSYEKNQSYPT) are compositionally biased toward polar residues. Positions 367 to 369 (NPF) match the NPF1 motif. Residues 379 to 381 (NPF) carry the NPF2 motif. An SH3 domain is found at 388-448 (VMEVRVRALY…YPANYVEPIQ (61 aa)).

The protein belongs to the PACSIN family. Post-translationally, phosphorylated on serine residues. In terms of tissue distribution, detected in intestine, cardiac muscle, lung and brain (at protein level). Expressed in all tissues tested, including, gizzard, liver, cardiac muscle, skeletal muscle and skin.

Its subcellular location is the cytoplasm. It is found in the cytoskeleton. The protein localises to the cytoplasmic vesicle membrane. It localises to the cell projection. The protein resides in the ruffle membrane. Its subcellular location is the early endosome. It is found in the recycling endosome membrane. The protein localises to the cell membrane. It localises to the membrane. The protein resides in the caveola. Its subcellular location is the cell junction. It is found in the focal adhesion. Functionally, regulates the morphogenesis and endocytosis of caveolae. Lipid-binding protein that is able to promote the tubulation of the phosphatidic acid-containing membranes it preferentially binds. Plays a role in intracellular vesicle-mediated transport. Involved in the endocytosis of cell-surface receptors like the EGF receptor, contributing to its internalization in the absence of EGF stimulus. Essential for endothelial organization in sprouting angiogenesis, modulates CDH5-based junctions. Facilitates endothelial front-rear polarity during migration by recruiting EHD4 and MICALL1 to asymmetric adherens junctions between leader and follower cells. The protein is Protein kinase C and casein kinase substrate in neurons protein 2 (PACSIN2) of Gallus gallus (Chicken).